The following is a 425-amino-acid chain: RNA polymerase sigma factor SigA (425 aa).

The sigma-70 factor domain-2 stretch occupies residues 193–263 (MVQSNLRLVV…TRAIADQSRT (71 aa)). An Interaction with polymerase core subunit RpoC motif is present at residues 217–220 (DLIQ). A sigma-70 factor domain-3 region spans residues 272–347 (ETISRIKKTT…EADGETPEDE (76 aa)). Positions 360-413 (VLDTLSPRERDVLRLRYGLDDGRMKTLEEIGQIFNVTRERIRQIEAKALRKLRH) are sigma-70 factor domain-4. Positions 386–405 (LEEIGQIFNVTRERIRQIEA) form a DNA-binding region, H-T-H motif.

Belongs to the sigma-70 factor family. RpoD/SigA subfamily. As to quaternary structure, interacts transiently with the RNA polymerase catalytic core.

It localises to the cytoplasm. Its function is as follows. Sigma factors are initiation factors that promote the attachment of RNA polymerase to specific initiation sites and are then released. This sigma factor is the primary sigma factor during exponential growth. This Synechocystis sp. (strain ATCC 27184 / PCC 6803 / Kazusa) protein is RNA polymerase sigma factor SigA.